A 61-amino-acid chain; its full sequence is Small ribosomal subunit protein uS14 (61 aa).

Residues Cys24, Cys27, Cys40, and Cys43 each contribute to the Zn(2+) site.

It belongs to the universal ribosomal protein uS14 family. Zinc-binding uS14 subfamily. As to quaternary structure, part of the 30S ribosomal subunit. Contacts proteins S3 and S10. The cofactor is Zn(2+).

In terms of biological role, binds 16S rRNA, required for the assembly of 30S particles and may also be responsible for determining the conformation of the 16S rRNA at the A site. The polypeptide is Small ribosomal subunit protein uS14 (Syntrophus aciditrophicus (strain SB)).